The chain runs to 249 residues: MSRGYGLIFSLKVVFTFLSLPHPPGLQGSLDRLQLEYVDIVFANRSDPNSPMEEIVRAMTYVINQGLALYWGTSRWSAAEIMEAYSMARQFNLIPPVCEQAENHFFQREKVEMQLPELYHKIGVGSVTWSPLACGLITSKYDGRVPDTCKATVKGYQWLKEKVQSEEGKKQQARVMDLLPTARQLGCTVGQLAIAWCLRSEGVSSVLLGVSSAEQLMEHLGSLQVLSQLTPQTVVEIDALLGNKSHSKK.

Positions 44, 74, 75, 100, 129, 130, 131, 132, 133, 134, 140, 150, 209, 211, 215, and 218 each coordinate NADP(+).

The protein belongs to the shaker potassium channel beta subunit family. Forms heteromultimeric complex with alpha subunits. Interacts with KCNA5 and KCNB2. In terms of tissue distribution, strong expression in brain, with highest levels in neocortical and allocortical regions, hippocampus, olfactory bulb and cerebellum. Also strong in kidney. Weak expression in lung, skeletal muscle and heart.

It localises to the cytoplasm. Functionally, regulatory subunit of the voltage-gated potassium (Kv) channels composed of pore-forming and potassium-conducting alpha subunits and of regulatory beta subunit. The beta-3/KCNAB3 subunit may mediate closure of potassium channels. Enhances the expression of Kv2.2/KCNB2 alpha subunit-containing Kv channels but not Kv2.1/KCNB1. May display nicotinamide adenine dinucleotide phosphate (NADPH)-dependent aldoketoreductase activity. The binding of oxidized and reduced NADP(H) cofactors may be required for the regulation of potassium channel activity. This is Voltage-gated potassium channel subunit beta-3 from Mus musculus (Mouse).